The chain runs to 144 residues: 3-dehydroquinate dehydratase (144 aa).

Tyrosine 22 (proton acceptor) is an active-site residue. Substrate is bound by residues asparagine 74, histidine 80, and aspartate 87. Histidine 100 serves as the catalytic Proton donor. Residues 101–102 and arginine 111 each bind substrate; that span reads LS.

The protein belongs to the type-II 3-dehydroquinase family. Homododecamer.

The enzyme catalyses 3-dehydroquinate = 3-dehydroshikimate + H2O. Its pathway is metabolic intermediate biosynthesis; chorismate biosynthesis; chorismate from D-erythrose 4-phosphate and phosphoenolpyruvate: step 3/7. Functionally, catalyzes a trans-dehydration via an enolate intermediate. This chain is 3-dehydroquinate dehydratase, found in Clostridium perfringens (strain ATCC 13124 / DSM 756 / JCM 1290 / NCIMB 6125 / NCTC 8237 / Type A).